The primary structure comprises 259 residues: Imidazole glycerol phosphate synthase subunit HisF (259 aa).

Catalysis depends on residues D11 and D130.

It belongs to the HisA/HisF family. As to quaternary structure, heterodimer of HisH and HisF.

The protein localises to the cytoplasm. The enzyme catalyses 5-[(5-phospho-1-deoxy-D-ribulos-1-ylimino)methylamino]-1-(5-phospho-beta-D-ribosyl)imidazole-4-carboxamide + L-glutamine = D-erythro-1-(imidazol-4-yl)glycerol 3-phosphate + 5-amino-1-(5-phospho-beta-D-ribosyl)imidazole-4-carboxamide + L-glutamate + H(+). The protein operates within amino-acid biosynthesis; L-histidine biosynthesis; L-histidine from 5-phospho-alpha-D-ribose 1-diphosphate: step 5/9. Its function is as follows. IGPS catalyzes the conversion of PRFAR and glutamine to IGP, AICAR and glutamate. The HisF subunit catalyzes the cyclization activity that produces IGP and AICAR from PRFAR using the ammonia provided by the HisH subunit. The polypeptide is Imidazole glycerol phosphate synthase subunit HisF (Oleidesulfovibrio alaskensis (strain ATCC BAA-1058 / DSM 17464 / G20) (Desulfovibrio alaskensis)).